Consider the following 505-residue polypeptide: 2,3-bisphosphoglycerate-independent phosphoglycerate mutase (505 aa).

The Mn(2+) site is built by Asp-15 and Ser-65. Ser-65 acts as the Phosphoserine intermediate in catalysis. Substrate contacts are provided by residues His-126, 156-157 (RD), Arg-187, Arg-193, 260-263 (RPDR), and Lys-333. 5 residues coordinate Mn(2+): Asp-398, His-402, Asp-439, His-440, and His-457.

The protein belongs to the BPG-independent phosphoglycerate mutase family. In terms of assembly, monomer. The cofactor is Mn(2+).

The catalysed reaction is (2R)-2-phosphoglycerate = (2R)-3-phosphoglycerate. Its pathway is carbohydrate degradation; glycolysis; pyruvate from D-glyceraldehyde 3-phosphate: step 3/5. Its function is as follows. Catalyzes the interconversion of 2-phosphoglycerate and 3-phosphoglycerate. The protein is 2,3-bisphosphoglycerate-independent phosphoglycerate mutase of Mycoplasmopsis pulmonis (strain UAB CTIP) (Mycoplasma pulmonis).